The primary structure comprises 207 residues: Guanylate kinase (207 aa).

The Guanylate kinase-like domain maps to 4–184 (GLLFIVSAPS…AVSDLYKIIR (181 aa)). An ATP-binding site is contributed by 11-18 (APSGTGKS).

The protein belongs to the guanylate kinase family.

The protein resides in the cytoplasm. It catalyses the reaction GMP + ATP = GDP + ADP. Its function is as follows. Essential for recycling GMP and indirectly, cGMP. The polypeptide is Guanylate kinase (Buchnera aphidicola subsp. Baizongia pistaciae (strain Bp)).